A 97-amino-acid chain; its full sequence is YcgL domain-containing protein PMI1171 (97 aa).

One can recognise a YcgL domain in the interval Met-3–Leu-87.

This is YcgL domain-containing protein PMI1171 from Proteus mirabilis (strain HI4320).